The primary structure comprises 183 residues: UPF0302 protein BH3876 (183 aa).

This sequence belongs to the UPF0302 family.

The protein is UPF0302 protein BH3876 of Halalkalibacterium halodurans (strain ATCC BAA-125 / DSM 18197 / FERM 7344 / JCM 9153 / C-125) (Bacillus halodurans).